Reading from the N-terminus, the 319-residue chain is BTB/POZ domain-containing adapter for CUL3-mediated RhoA degradation protein 2 (319 aa).

The region spanning 31–99 (KYIRLNVGGC…LRDDTIALPK (69 aa)) is the BTB domain.

It belongs to the BACURD family. As to quaternary structure, component of the BCR(TNFAIP1) E3 ubiquitin ligase complex, at least composed of cul3, tnfaip1/bacurd2 and rbx1.

Its subcellular location is the cytoplasm. It is found in the nucleus. It localises to the endosome. The protein operates within protein modification; protein ubiquitination. Its function is as follows. Substrate-specific adapter of a BCR (BTB-CUL3-RBX1) E3 ubiquitin-protein ligase complex involved in regulation of cytoskeleton structure. The BCR(TNFAIP1) E3 ubiquitin ligase complex mediates the ubiquitination of target proteins, leading to their degradation by the proteasome. The chain is BTB/POZ domain-containing adapter for CUL3-mediated RhoA degradation protein 2 (tnfaip1) from Xenopus laevis (African clawed frog).